The sequence spans 231 residues: Large ribosomal subunit protein uL3 (231 aa).

Gln151 bears the N5-methylglutamine mark.

It belongs to the universal ribosomal protein uL3 family. In terms of assembly, part of the 50S ribosomal subunit. Forms a cluster with proteins L14 and L19. Post-translationally, methylated by PrmB.

Functionally, one of the primary rRNA binding proteins, it binds directly near the 3'-end of the 23S rRNA, where it nucleates assembly of the 50S subunit. The sequence is that of Large ribosomal subunit protein uL3 from Ehrlichia canis (strain Jake).